The sequence spans 889 residues: Mitochondrial intermediate peptidase (889 aa).

The transit peptide at 1–30 (MASTSKNAQRAAASVAHSYHVCLARRMSRL) directs the protein to the mitochondrion. A disordered region spans residues 60 to 112 (SSSLAAQRVQRPTSAGPILTNPISDHEKDNDELRSLFDAPPTSSSANHLRSSG). Residues 83–94 (SDHEKDNDELRS) are compositionally biased toward basic and acidic residues. Over residues 100–112 (PTSSSANHLRSSG) the composition is skewed to polar residues. Residue H670 participates in Zn(2+) binding. Residue E671 is part of the active site. Residues H674 and H677 each contribute to the Zn(2+) site.

The protein belongs to the peptidase M3 family. The cofactor is Zn(2+).

The protein resides in the mitochondrion matrix. It catalyses the reaction Release of an N-terminal octapeptide as second stage of processing of some proteins imported into the mitochondrion.. In terms of biological role, cleaves proteins, imported into the mitochondrion, to their mature size. While most mitochondrial precursor proteins are processed to the mature form in one step by mitochondrial processing peptidase (MPP), the sequential cleavage by MIP of an octapeptide after initial processing by MPP is a required step for a subgroup of nuclear-encoded precursor proteins destined for the matrix or the inner membrane. The chain is Mitochondrial intermediate peptidase (OCT1) from Mycosarcoma maydis (Corn smut fungus).